Consider the following 345-residue polypeptide: Platelet-derived growth factor C (345 aa).

Positions 1-22 (MLLLGLLLLTSALAGQRTGTRA) are cleaved as a signal peptide. Over residues 24 to 33 (SNLSSKLQLS) the composition is skewed to polar residues. The interval 24–45 (SNLSSKLQLSSDKEQNGVQDPR) is disordered. Residue N25 is glycosylated (N-linked (GlcNAc...) asparagine). Over residues 34–45 (SDKEQNGVQDPR) the composition is skewed to basic and acidic residues. The 118-residue stretch at 46-163 (HERVVTISGN…PGFCIHYSII (118 aa)) folds into the CUB domain. N55 is a glycosylation site (N-linked (GlcNAc...) asparagine). 4 disulfide bridges follow: C104–C124, C250–C294, C280–C335, and C287–C337.

Belongs to the PDGF/VEGF growth factor family. In terms of assembly, homodimer; disulfide-linked. Interacts with PDGFRA homodimers, and with heterodimers formed by PDGFRA and PDGFRB. Interacts (via CUB domain) with PLAT (via kringle domain). In terms of processing, proteolytic removal of the N-terminal CUB domain releasing the core domain is necessary for unmasking the receptor-binding epitopes of the core domain. Cleavage after basic residues in the hinge region (region connecting the CUB and growth factor domains) gives rise to the receptor-binding form. Cleaved by PLAT and PLG. Post-translationally, sumoylated with SUMO1. N-glycosylated. Highly expressed in the kidney and adrenal gland. In the kidney, it is expressed in arteriolar smooth muscle cells and in epithelial cells of individual segments (at protein level).

The protein localises to the cytoplasm. It localises to the cytosol. It is found in the secreted. Its subcellular location is the nucleus. The protein resides in the cytoplasmic granule. The protein localises to the cell membrane. Growth factor that plays an essential role in the regulation of embryonic development, cell proliferation, cell migration, survival and chemotaxis. Potent mitogen and chemoattractant for cells of mesenchymal origin. Required for normal skeleton formation during embryonic development, especially for normal development of the craniofacial skeleton and for normal development of the palate. Required for normal skin morphogenesis during embryonic development. Plays an important role in wound healing, where it appears to be involved in three stages: inflammation, proliferation and remodeling. Plays an important role in angiogenesis and blood vessel development. Involved in fibrotic processes, in which transformation of interstitial fibroblasts into myofibroblasts plus collagen deposition occurs. The CUB domain has mitogenic activity in coronary artery smooth muscle cells, suggesting a role beyond the maintenance of the latency of the PDGF domain. In the nucleus, PDGFC seems to have additional function. This is Platelet-derived growth factor C (Pdgfc) from Rattus norvegicus (Rat).